We begin with the raw amino-acid sequence, 359 residues long: MENKKVIVGISGGVDSSVSALLLKQQGYDVTGVFMKNWEEDDTDEFCSAEQDIADAQAVCDSIGIPFKKINFAAEYWDNVFEHFLIEYKAGRTPNPDILCNKEIKFKAFLSYVHLLGGDYIATGHYAQTRLAADGSVQLVKGLDDNKDQTYFLYTLGQEQLRQTIFPIGNIEKSKVREIAKENNLVTFDKKDSTGICFIGERKFKEFLSKYLPAQKGEIHDENGIKIGMHDGLMYYTIGQRQGLGIGGVKDRPEVPWFAAKKDLENNVLIAVQGHDHPLLFKQSLQAIELSWVAGMAPADKFRCAAKVRYRQKDQSCEVEVNQDGSVNVTFDQPQRAITPGQSVVFYIDDVCLGGGVII.

Residues 9–16 (GISGGVDS) and M35 contribute to the ATP site. The tract at residues 95-97 (NPD) is interaction with target base in tRNA. The Nucleophile role is filled by C100. An intrachain disulfide couples C100 to C197. G124 serves as a coordination point for ATP. The tract at residues 147 to 149 (KDQ) is interaction with tRNA. C197 acts as the Cysteine persulfide intermediate in catalysis. The segment at 309-310 (RY) is interaction with tRNA.

Belongs to the MnmA/TRMU family.

It localises to the cytoplasm. The catalysed reaction is S-sulfanyl-L-cysteinyl-[protein] + uridine(34) in tRNA + AH2 + ATP = 2-thiouridine(34) in tRNA + L-cysteinyl-[protein] + A + AMP + diphosphate + H(+). In terms of biological role, catalyzes the 2-thiolation of uridine at the wobble position (U34) of tRNA, leading to the formation of s(2)U34. The chain is tRNA-specific 2-thiouridylase MnmA from Francisella tularensis subsp. tularensis (strain FSC 198).